Consider the following 714-residue polypeptide: Probable serine/threonine-protein kinase At1g09600 (714 aa).

Residues 1–64 (MGCNCTKGTR…NVGFEERSND (64 aa)) form a disordered region. G2 carries N-myristoyl glycine lipidation. Residues 16–27 (VDNSNSIVSNVN) show a composition bias toward low complexity. Over residues 31-46 (RRSKPKKTPKKKKKSK) the composition is skewed to basic residues. One can recognise a Protein kinase domain in the interval 163 to 447 (FEKLEKIGQG…TASALESEFF (285 aa)). Residues 169-177 (IGQGTYSSV) and K192 each bind ATP. D287 acts as the Proton acceptor in catalysis. Residues 471–498 (KAQEEEAKRKKDTSSKQNDSKQVSRESK) are compositionally biased toward basic and acidic residues. Disordered stretches follow at residues 471-579 (KAQE…RKEL) and 693-714 (VDKKTNRGDNRQTQAFLAANGR). Polar residues-rich tracts occupy residues 506-528 (NAESLTSIQKRQGQHNQVSNSDK) and 556-573 (GVSSVNRNGENVMMGSSR).

This sequence belongs to the protein kinase superfamily. Ser/Thr protein kinase family.

The sequence is that of Probable serine/threonine-protein kinase At1g09600 from Arabidopsis thaliana (Mouse-ear cress).